The following is a 308-amino-acid chain: tRNA pseudouridine synthase B (308 aa).

The active-site Nucleophile is the aspartate 46.

Belongs to the pseudouridine synthase TruB family. Type 1 subfamily.

The enzyme catalyses uridine(55) in tRNA = pseudouridine(55) in tRNA. Its function is as follows. Responsible for synthesis of pseudouridine from uracil-55 in the psi GC loop of transfer RNAs. The chain is tRNA pseudouridine synthase B from Marinomonas sp. (strain MWYL1).